The chain runs to 360 residues: 3-dehydroquinate synthase (360 aa).

NAD(+)-binding positions include 72–77 (DGEEFK), 106–110 (GVVGD), 130–131 (TT), Lys143, Lys152, and 170–173 (TLTT). Zn(2+) is bound by residues Glu185, His248, and His265.

The protein belongs to the sugar phosphate cyclases superfamily. Dehydroquinate synthase family. Co(2+) serves as cofactor. The cofactor is Zn(2+). It depends on NAD(+) as a cofactor.

Its subcellular location is the cytoplasm. The catalysed reaction is 7-phospho-2-dehydro-3-deoxy-D-arabino-heptonate = 3-dehydroquinate + phosphate. It participates in metabolic intermediate biosynthesis; chorismate biosynthesis; chorismate from D-erythrose 4-phosphate and phosphoenolpyruvate: step 2/7. In terms of biological role, catalyzes the conversion of 3-deoxy-D-arabino-heptulosonate 7-phosphate (DAHP) to dehydroquinate (DHQ). The sequence is that of 3-dehydroquinate synthase from Geobacter metallireducens (strain ATCC 53774 / DSM 7210 / GS-15).